The sequence spans 265 residues: Small ribosomal subunit protein uS2 (265 aa).

The disordered stretch occupies residues 231–265; the sequence is VEEEYEDYEGSEEDYDYDETEYADSVIPEDGEEAE.

This sequence belongs to the universal ribosomal protein uS2 family.

The protein is Small ribosomal subunit protein uS2 of Nostoc sp. (strain PCC 7120 / SAG 25.82 / UTEX 2576).